A 334-amino-acid polypeptide reads, in one-letter code: Antho-RFamide neuropeptides (334 aa).

The N-terminal stretch at 1–26 (MLVAMTTASYVTILVTLLFHILTINA) is a signal peptide. Positions 27–116 (KTVTKRAKET…REFQGRFGRE (90 aa)) are excised as a propeptide. 2 stretches are compositionally biased toward basic and acidic residues: residues 115-289 (REQG…RELL) and 303-334 (PQTR…ANKS). The disordered stretch occupies residues 115-334 (REQGRFGREE…ESNDEEANKS (220 aa)). At phenylalanine 120 the chain carries Phenylalanine amide. Residues 122 to 125 (REED) constitute a propeptide that is removed on maturation. At phenylalanine 129 the chain carries Phenylalanine amide. A propeptide spanning residues 131 to 134 (REED) is cleaved from the precursor. Phenylalanine amide is present on phenylalanine 138. Residues 140 to 142 (REE) constitute a propeptide that is removed on maturation. Phenylalanine 146 carries the phenylalanine amide modification. Positions 148–151 (REED) are excised as a propeptide. At phenylalanine 155 the chain carries Phenylalanine amide. Residues 157-160 (REED) constitute a propeptide that is removed on maturation. Position 164 is a phenylalanine amide (phenylalanine 164). A propeptide spanning residues 166–169 (REED) is cleaved from the precursor. Phenylalanine 173 is modified (phenylalanine amide). A propeptide spanning residues 175–178 (REEE) is cleaved from the precursor. Residue phenylalanine 182 is modified to Phenylalanine amide. Residues 184 to 187 (REED) constitute a propeptide that is removed on maturation. A Phenylalanine amide modification is found at phenylalanine 191. Residues 193–196 (REEE) constitute a propeptide that is removed on maturation. Phenylalanine 200 bears the Phenylalanine amide mark. The propeptide occupies 202 to 205 (REED). At phenylalanine 209 the chain carries Phenylalanine amide. Residues 211–214 (REED) constitute a propeptide that is removed on maturation. A Phenylalanine amide modification is found at phenylalanine 218. The propeptide occupies 220–223 (REEE). Phenylalanine amide is present on phenylalanine 227. Positions 229-233 (KRDED) are excised as a propeptide. A Phenylalanine amide modification is found at phenylalanine 237. The propeptide occupies 239–242 (KRED). Phenylalanine 246 is modified (phenylalanine amide). Residues 248-252 (KRDED) constitute a propeptide that is removed on maturation. The residue at position 256 (phenylalanine 256) is a Phenylalanine amide. Positions 258–262 (KRDED) are excised as a propeptide. Phenylalanine amide is present on phenylalanine 266. Residues 268 to 271 (KRED) constitute a propeptide that is removed on maturation. Phenylalanine 275 carries the phenylalanine amide modification. A propeptide spanning residues 277–280 (KRED) is cleaved from the precursor. A Phenylalanine amide modification is found at phenylalanine 284. Positions 286–334 (RELLAKLNKRTTSIQEDPQTRFRDVQMTRRNVAKKDKIEESNDEEANKS) are excised as a propeptide.

The protein belongs to the FARP (FMRFamide related peptide) family. In terms of tissue distribution, neurons associated with smooth muscle fibers.

The protein resides in the secreted. Functionally, not known but it could act as a transmitter at neuromuscular synapses. The polypeptide is Antho-RFamide neuropeptides (Calliactis parasitica (Sea anemone)).